The sequence spans 61 residues: 2S seed storage albumin protein (61 aa).

It belongs to the 2S seed storage albumins family. As to quaternary structure, the mature protein consists of a small and a large chain linked by 2 disulfide bonds.

This is a 2S seed storage protein. Inhibits cell-free protein synthesis. The sequence is that of 2S seed storage albumin protein from Cucurbita moschata (Winter crookneck squash).